The following is a 263-amino-acid chain: N-acyl homoserine lactonase AttM (263 aa).

Residues His-103, His-105, Asp-107, His-108, His-180, Asp-202, and His-247 each coordinate Zn(2+).

The protein belongs to the metallo-beta-lactamase superfamily. Zn(2+) serves as cofactor.

The enzyme catalyses an N-acyl-L-homoserine lactone + H2O = an N-acyl-L-homoserine + H(+). The chain is N-acyl homoserine lactonase AttM from Rhizobium johnstonii (strain DSM 114642 / LMG 32736 / 3841) (Rhizobium leguminosarum bv. viciae).